A 142-amino-acid polypeptide reads, in one-letter code: Putative tyrosine phosphatase 123R (142 aa).

Positions 2 to 137 (EPTKIVENLY…LAQFERWLNS (136 aa)) constitute a Tyrosine-protein phosphatase domain. The active-site Phosphocysteine intermediate is the C81.

The protein belongs to the protein-tyrosine phosphatase family.

The chain is Putative tyrosine phosphatase 123R from Invertebrate iridescent virus 6 (IIV-6).